Here is a 276-residue protein sequence, read N- to C-terminus: E3 ubiquitin-protein ligase CCNB1IP1 (276 aa).

Residues 10 to 52 (CNYRKCRIKLSGYAWVTACSHIFCDQHGSGEFSRSPAICPACN) form an RING-type; atypical zinc finger. A coiled-coil region spans residues 146 to 182 (MKKVLEEYKKKFSDISEKLMERNRQYQKLQGLYDSLR).

As to quaternary structure, interacts with CCNB1, UBE2L3 and NF2. Ubiquitinated; autoubiquitinated. In terms of processing, phosphorylated by CDK1 on serine or threonine residues (in vitro). In terms of tissue distribution, expressed predominantly in the testes and 17 day embryos (corresponding to prophase I in females). Weakly or not expressed in other tissues.

Its subcellular location is the nucleus. The protein resides in the chromosome. The catalysed reaction is S-ubiquitinyl-[E2 ubiquitin-conjugating enzyme]-L-cysteine + [acceptor protein]-L-lysine = [E2 ubiquitin-conjugating enzyme]-L-cysteine + N(6)-ubiquitinyl-[acceptor protein]-L-lysine.. The protein operates within protein modification; protein ubiquitination. Its function is as follows. Ubiquitin E3 ligase that acts as a limiting factor for crossing-over during meiosis: required during zygonema to limit the colocalization of RNF212 with MutS-gamma-associated recombination sites and thereby establish early differentiation of crossover and non-crossover sites. Later, it is directed by MutL-gamma to stably accumulate at designated crossover sites. Probably promotes the dissociation of RNF212 and MutS-gamma to allow the progression of recombination and the implementation of the final steps of crossing over. Modulates cyclin-B levels and participates in the regulation of cell cycle progression through the G2 phase. Overexpression causes delayed entry into mitosis. This Mus musculus (Mouse) protein is E3 ubiquitin-protein ligase CCNB1IP1 (Ccnb1ip1).